Here is an 84-residue protein sequence, read N- to C-terminus: UPF0473 protein CLI_2624 (84 aa).

This sequence belongs to the UPF0473 family.

This Clostridium botulinum (strain Langeland / NCTC 10281 / Type F) protein is UPF0473 protein CLI_2624.